We begin with the raw amino-acid sequence, 102 residues long: Small ribosomal subunit protein uS10 (102 aa).

It belongs to the universal ribosomal protein uS10 family. As to quaternary structure, part of the 30S ribosomal subunit.

Its function is as follows. Involved in the binding of tRNA to the ribosomes. The chain is Small ribosomal subunit protein uS10 from Pelotomaculum thermopropionicum (strain DSM 13744 / JCM 10971 / SI).